The following is a 100-amino-acid chain: Urease subunit gamma (100 aa).

This sequence belongs to the urease gamma subunit family. In terms of assembly, heterotrimer of UreA (gamma), UreB (beta) and UreC (alpha) subunits. Three heterotrimers associate to form the active enzyme.

Its subcellular location is the cytoplasm. It carries out the reaction urea + 2 H2O + H(+) = hydrogencarbonate + 2 NH4(+). Its pathway is nitrogen metabolism; urea degradation; CO(2) and NH(3) from urea (urease route): step 1/1. The polypeptide is Urease subunit gamma (Vibrio parahaemolyticus).